The following is a 236-amino-acid chain: ATP synthase subunit a (236 aa).

5 consecutive transmembrane segments (helical) span residues 17 to 37, 76 to 96, 113 to 133, 170 to 190, and 196 to 216; these read WTNLISGTIVFVITFFLLFGL, SFFVFVLFVFLFISNQLGLII, PVVTMTLALCAVTLSHFAGVA, IFGNIYAGELLLKLLAGMAFS, and MIVSLPLEIIWQGFSVFIGAI.

The protein belongs to the ATPase A chain family. In terms of assembly, F-type ATPases have 2 components, CF(1) - the catalytic core - and CF(0) - the membrane proton channel. CF(1) has five subunits: alpha(3), beta(3), gamma(1), delta(1), epsilon(1). CF(0) has three main subunits: a(1), b(2) and c(9-12). The alpha and beta chains form an alternating ring which encloses part of the gamma chain. CF(1) is attached to CF(0) by a central stalk formed by the gamma and epsilon chains, while a peripheral stalk is formed by the delta and b chains.

The protein localises to the cell membrane. In terms of biological role, key component of the proton channel; it plays a direct role in the translocation of protons across the membrane. In Limosilactobacillus fermentum (strain NBRC 3956 / LMG 18251) (Lactobacillus fermentum), this protein is ATP synthase subunit a.